Reading from the N-terminus, the 505-residue chain is Lysine--tRNA ligase (505 aa).

Mg(2+) contacts are provided by Glu415 and Glu422.

It belongs to the class-II aminoacyl-tRNA synthetase family. Homodimer. The cofactor is Mg(2+).

It localises to the cytoplasm. It carries out the reaction tRNA(Lys) + L-lysine + ATP = L-lysyl-tRNA(Lys) + AMP + diphosphate. In Edwardsiella ictaluri (strain 93-146), this protein is Lysine--tRNA ligase.